Here is an 877-residue protein sequence, read N- to C-terminus: Alanine--tRNA ligase (877 aa).

Residues H567, H571, C669, and H673 each coordinate Zn(2+).

This sequence belongs to the class-II aminoacyl-tRNA synthetase family. Zn(2+) is required as a cofactor.

It is found in the cytoplasm. The catalysed reaction is tRNA(Ala) + L-alanine + ATP = L-alanyl-tRNA(Ala) + AMP + diphosphate. In terms of biological role, catalyzes the attachment of alanine to tRNA(Ala) in a two-step reaction: alanine is first activated by ATP to form Ala-AMP and then transferred to the acceptor end of tRNA(Ala). Also edits incorrectly charged Ser-tRNA(Ala) and Gly-tRNA(Ala) via its editing domain. The protein is Alanine--tRNA ligase of Lactobacillus delbrueckii subsp. bulgaricus (strain ATCC 11842 / DSM 20081 / BCRC 10696 / JCM 1002 / NBRC 13953 / NCIMB 11778 / NCTC 12712 / WDCM 00102 / Lb 14).